Consider the following 1434-residue polypeptide: MLRLPKKGLPRFEQVQDEDTYLENLAIQRNASAFFEKYDRSEIQELLTTALVSWLSAKEDVRSQVDLPCGIMSQMNNVGFSTAILLTPVDPTALLDYREVHQMIRELAIGIYCLNQIPSISLEANYDQSSSCQLPPAYYDTRIGQILINIDYMLKALWHGIYMPKEKRARFSELWRAIMDIDPDGKPQTNKDIFSEFSSAGLTDITKDPDFNEIYDEDVNEDPTYDPNSPEETAVFMKYAENIMLKLTFSTTQIQQYENVFIFETGYWLTNAIKYNQDYLDICTYQRLQQRLYLQKKIIQKHFEKKKDIRRGIGYLKLICFLIPFLLSLKKKMKVPYLSSLLQPFSDDKVKTERELPPFIYGRDFKCQNFHYKENQYFHVHGGIEFDISTPSIENALEDFQKNLEKIRDCAANTFIEDSGYKEYYSIPVMEFHGKSYYVIYFELETFYQQLYKTQWWGAINEIVNNLRLKRLPLTDAQLHEQFKKKLGFKRAMKCKSIPFGMKSAVERGLSAVFHTFSRKTSSSTINVSDEAGYTIFHHAALHNRVSIICQLCNANFKVNQRRFVTFSQGPTPLHLAAQACSLETTVCLLCSKADYTLSEKRGWMPIHFAAFYDNVCIIIALCRKDPSLLEAEATAENQCTPLLLAATSGALDTIQYLFSIGANWRKTDIKGNNIIHLSVLTFHTEVLKYIIKLNIPELPVWKTLVEMLQCESYKRRMMAVMSLEVICLANDQYWRCILDAGTIPALINLLKSSKIKLQCKTVGLLSNISTHKSAVHALVEAGGIPSLINLLVCDEPEVHSRCAVILYDIAQCENKDVIAKYNGIPSLINLLNLNIENVLVNVMNCIRVLCIGNENNQRAVREHKGLPYLIRFLSSDSDVLKAVSSAAIAEVGRDNKEIQDAIAMEGAIPPLVALFKGKQISVQMKGAMAVESLASHNALIQKAFLEKSLTKYLLKLLKAFQIDVKEQGAVALWALAGQTLKQQKYMAEQIGYSFIINMLLSPSAKMQYVGGEAVIALSKDSRMHQNQICEGNGIAPLVRLLRISTIAEGTLLSVIRAVGSICIGVAHTSNPVSQQLVVDENAFPVLIQLLRNHPSPNIKVEVAFSLACIVLGNDVLQKDLHENEGFEYADVLYLLHSTEKDICLRAGYALTLFAFNNRFQQYLILESGIMTISIFERFLESTVETEKAMAAFQIVVLAKVIRDMDHITLSARGVTILVDSLYSVQTSTIVLTGNLIASLAHSRAGIPEAFTTLGTIQRLCYHLYSGIEEVRAACSSALGYLTYNANAFRILLKECRNKPNQFIRIKNNISRDASINPAFLKEFQMQQTLVGLPSLSLEKNGGPSIIPIFKRGKEHRRKLKPKIQPKDSLTLLPPVTNFMGLFKATKKTKDSHNIFSFSSTITSDITNVSRPRIVCLNQLGKHVQKANPEPAEG.

The helical transmembrane segment at 309–329 threads the bilayer; sequence IRRGIGYLKLICFLIPFLLSL. ANK repeat units lie at residues 532 to 561, 569 to 598, 602 to 631, 638 to 667, and 671 to 701; these read AGYT…KVNQ, QGPT…DYTL, RGWM…SLLE, NQCT…NWRK, and KGNN…ELPV. ARM repeat units lie at residues 732 to 771, 773 to 812, 814 to 852, 855 to 894, 897 to 936, and 1072 to 1112; these read DQYW…NIST, KSAV…DIAQ, ENKD…VLCI, ENNQ…EVGR, KEIQ…SLAS, and PVSQ…CIVL.

Ubiquitously expressed with highest level in pancreas and lowest in skeletal muscle.

The protein localises to the membrane. The polypeptide is Ankyrin and armadillo repeat-containing protein (ANKAR) (Homo sapiens (Human)).